The primary structure comprises 354 residues: P2Y purinoceptor 13 (354 aa).

The Extracellular segment spans residues 1-49; it reads MTAAIRRQRELSILPKVTLEAMNTTVMQGFNRSERCPRDTRIVQLVFPA. N-linked (GlcNAc...) asparagine glycans are attached at residues asparagine 23 and asparagine 31. A helical membrane pass occupies residues 50–70; that stretch reads LYTVVFLTGILLNTLALWVFV. Residues 71-77 are Cytoplasmic-facing; that stretch reads HIPSSST. A helical membrane pass occupies residues 78-98; the sequence is FIIYLKNTLVADLIMTLMLPF. Topologically, residues 99 to 117 are extracellular; sequence KILSDSHLAPWQLRAFVCR. Cysteine 116 and cysteine 194 are disulfide-bonded. A helical transmembrane segment spans residues 118–138; the sequence is FSSVIFYETMYVGIVLLGLIA. Residues 139–161 are Cytoplasmic-facing; the sequence is FDRFLKIIRPLRNIFLKKPVFAK. Residues 162–182 form a helical membrane-spanning segment; the sequence is TVSIFIWFFLFFISLPNTILS. The Extracellular segment spans residues 183–211; the sequence is NKEATPSSVKKCASLKGPLGLKWHQMVNN. The helical transmembrane segment at 212 to 232 threads the bilayer; sequence ICQFIFWTVFILMLVFYVVIA. Residues 233 to 252 are Cytoplasmic-facing; sequence KKVYDSYRKSKSKDRKNNKK. The chain crosses the membrane as a helical span at residues 253 to 273; the sequence is LEGKVFVVVAVFFVCFAPFHF. At 274–300 the chain is on the extracellular side; it reads ARVPYTHSQTNNKTDCRLQNQLFIAKE. A glycan (N-linked (GlcNAc...) asparagine) is linked at asparagine 285. The chain crosses the membrane as a helical span at residues 301–321; sequence TTLFLAATNICMDPLIYIFLC. At 322–333 the chain is on the cytoplasmic side; it reads KKFTEKLPCMQG. Positions 335 to 354 are disordered; sequence KTTASSQENHSSQTDNITLG.

Belongs to the G-protein coupled receptor 1 family. In terms of tissue distribution, strong expression in spleen and adult brain. Lower expression in placenta, lung, liver, spinal cord, thymus, small intestine, uterus, stomach, testis, fetal brain, and adrenal gland. Not detected in pancreas, heart, kidney, skeletal muscle, ovary or fetal aorta. Clearly detected in lymph node and bone marrow, weakly detected in peripheral blood mononuclear cells (PBMC) and in peripheral blood leukocytes (PBL), but not detected in polymorphonuclear cells (PMN). In the brain, detected in all brain regions examined.

The protein resides in the cell membrane. Its function is as follows. Receptor for ADP. Coupled to G(i)-proteins. May play a role in hematopoiesis and the immune system. The protein is P2Y purinoceptor 13 (P2RY13) of Homo sapiens (Human).